The following is a 229-amino-acid chain: uncharacterized protein (229 aa).

The region spanning 2 to 229 is the ABC transporter domain; it reads LTLNNISKSY…LDERGDISHA (228 aa). 38-45 contacts ATP; it reads GPSGSGKS.

Belongs to the ABC transporter superfamily.

This is an uncharacterized protein from Bacillus subtilis (strain 168).